The following is a 106-amino-acid chain: Ribosomal processing cysteine protease Prp (106 aa).

His22 (proton donor) is an active-site residue. The active-site Nucleophile is Cys34.

This sequence belongs to the Prp family. In terms of assembly, homodimer. A mutant protein unable to cleave bL27 copurifies with its substrate.

With respect to regulation, not inhibited by short peptide analogs; a 6-mer inhibits only 20% while a 13-mer inhibits 63%. Inhibited by Ac-KLNLQFF-CH(2) which binds covalantly to Cys-34. Inhibited by mersalyl acid (C13H18HgNO6). Functionally, an essential cysteine protease that cleaves the N-terminal 9 amino acids from ribosomal protein bL27. Also acts as an N-terminal protease on the major capsid and scaffold assembly proteins of bacteriophage 80alpha. Cleavage of the N-terminus of bL27 (and thus this enzyme) is essential for growth; it cannot be replaced by a 'pre-cleaved' or non-cleavable form of bL27. Might serve a chaperone function during ribosome assembly. This is Ribosomal processing cysteine protease Prp from Staphylococcus aureus (strain NCTC 8325 / PS 47).